We begin with the raw amino-acid sequence, 803 residues long: H(+)/Cl(-) exchange transporter 7 (803 aa).

A disordered region spans residues 1-46 (MANVSKKVSWSGRDRDDEEGAPLLRRTGQPDEETPLLNGAGPGARQ). Residues 1–124 (MANVSKKVSW…TAFRTVEIKR (124 aa)) lie on the Cytoplasmic side of the membrane. S9 is modified (phosphoserine). The next 2 membrane-spanning stretches (helical) occupy residues 125–157 (WVIC…YRVI) and 172–195 (FSLL…VAFI). The short motif at 201 to 205 (GSGIP) is the Selectivity filter part_1 element. S202 is a chloride binding site. The helical intramembrane region spans 204-211 (IPQIKCFL). Transmembrane regions (helical) follow at residues 221-239 (RLKT…VVGG) and 245-262 (EGPM…ISQG). Positions 243-247 (GKEGP) match the Selectivity filter part_2 motif. Intramembrane regions (helical) lie at residues 286 to 298 (FVSA…VSAA) and 302 to 310 (PVGGVLFSL). 5 consecutive transmembrane segments (helical) span residues 320 to 339 (FLTW…LNFV), 373 to 403 (IPVF…FRIR), 408 to 430 (PCLQ…FVLI), 485 to 505 (PMTL…TYGL), and 510 to 533 (GVFI…LSYL). A Selectivity filter part_3 motif is present at residues 510–514 (GVFIP). F512 is a binding site for chloride. The helical intramembrane region spans 543–557 (GKYALMGAAAQLGGI). Positions 558 to 560 (VRM) form an intramembrane region, note=Loop between two helices. Positions 561–572 (TLSLTVIMMEAT) form an intramembrane region, helical. Positions 573 to 576 (SNVT) form an intramembrane region, note=Loop between two helices. The chain crosses the membrane as a helical span at residues 577–595 (YGFPIMLVLMTAKIVGDVF). At 596–803 (IEGLYDMHIQ…GLEELSLAQT (208 aa)) the chain is on the cytoplasmic side. Y600 contacts chloride. CBS domains lie at 629-693 (MSTP…VFVE) and 739-797 (MNPS…GLEE). Residues 656-658 (HNG) and 781-784 (TRKD) each bind ATP. S799 is subject to Phosphoserine.

Belongs to the chloride channel (TC 2.A.49) family. ClC-7/CLCN7 subfamily. In terms of assembly, chloride channel 7 are heteromers of alpha (CLCN7) and beta (OSTM1) subunits. In terms of tissue distribution, liver, spleen, kidneys and brain.

It localises to the lysosome membrane. The enzyme catalyses 2 chloride(in) + H(+)(out) = 2 chloride(out) + H(+)(in). Functionally, slowly voltage-gated channel mediating the exchange of chloride ions against protons. Functions as antiporter and contributes to the acidification of the lysosome lumen and may be involved in maintaining lysosomal pH. The CLC channel family contains both chloride channels and proton-coupled anion transporters that exchange chloride or another anion for protons. The presence of conserved gating glutamate residues is typical for family members that function as antiporters. The protein is H(+)/Cl(-) exchange transporter 7 of Mus musculus (Mouse).